The sequence spans 619 residues: Manganese lipoxygenase (619 aa).

Positions 1–16 (MRVLVWIAGLAPLAVA) are cleaved as a signal peptide. 6 N-linked (GlcNAc...) asparagine glycosylation sites follow: Asn32, Asn42, Asn62, Asn86, Asn164, and Asn229. One can recognise a Lipoxygenase domain in the interval 55-619 (TLPCEDGNST…PGNIPFYLSV (565 aa)). Mn(2+) contacts are provided by His298, His303, His483, and Asn487. Asn515 and Asn549 each carry an N-linked (GlcNAc...) asparagine glycan. Val619 contacts Mn(2+).

Belongs to the lipoxygenase family. Manganese lipoxygenase subfamily. Mn(2+) serves as cofactor.

It localises to the secreted. The catalysed reaction is (9Z,12Z)-octadecadienoate + O2 = (9S)-hydroperoxy-(10E,12Z)-octadecadienoate. It catalyses the reaction (9Z,12Z)-octadecadienoate + O2 = (11S)-hydroperoxy-(9Z,12Z)-octadecadienoate. The enzyme catalyses (9Z,12Z)-octadecadienoate + O2 = (13R)-hydroperoxy-(9Z,11E)-octadecadienoate. It carries out the reaction (9Z,12Z,15Z)-octadecatrienoate + O2 = (9S)-hydroperoxy-(10E,12Z,15Z)-octadecatrienoate. The catalysed reaction is (9Z,12Z,15Z)-octadecatrienoate + O2 = (11R)-hydroperoxy-(9Z,12Z,15Z)-octadecatrienoate. It catalyses the reaction (9Z,12Z,15Z)-octadecatrienoate + O2 = (13R)-hydroperoxy-(9Z,11E,15Z)-octadecatrienoate. The enzyme catalyses (9S)-hydroperoxy-(10E,12Z,15Z)-octadecatrienoate + O2 = (9S,16S)-dihydroperoxy-(10E,12Z,14E)-octadecatrienoate. Its function is as follows. Lipoxygenase that metabolizes linoleic and alpha-linolenic acids to 9S-, 11- and 13R-hydroperoxy fatty acids. At the end of lipoxygenation, the intermediate product 11S-HPODE from linoleic acid is then transformed into 9S-HPODE and 13R-HPODE as the final products. The intermediate product 11R-HPOTrE from alpha-linolenic acid is transformed into 9S-HPOTrE and 13R-HPOTrE as the final products. 9S-HPOTrE is further oxidized by the enzyme to 9S,16S-DiHPOTrE as the end product. The sequence is that of Manganese lipoxygenase from Pyricularia oryzae (strain 70-15 / ATCC MYA-4617 / FGSC 8958) (Rice blast fungus).